Here is a 676-residue protein sequence, read N- to C-terminus: Cysteine-rich receptor-like protein kinase 4 (676 aa).

An N-terminal signal peptide occupies residues 1–16; it reads MSFFWLFPFLLHLSFA. The Extracellular segment spans residues 17–287; the sequence is DSLSPLSAPV…ISERGKGRNS (271 aa). Gnk2-homologous domains lie at 31–135 and 146–246; these read HLNH…HRNI and ILLN…NYSF. Residues N33, N46, N64, N152, N181, N243, and N248 are each glycosylated (N-linked (GlcNAc...) asparagine). Residues 252–279 are disordered; sequence TRSSSPPSLPPRSTPQQQLKLAPPPLIS. An N-linked (GlcNAc...) asparagine glycan is attached at N286. The chain crosses the membrane as a helical span at residues 288 to 308; that stretch reads SVIIVVVVPIIALLLLFVAFF. Residues 309 to 676 lie on the Cytoplasmic side of the membrane; that stretch reads SLRAKKTRTN…DASITNVTPR (368 aa). In terms of domain architecture, Protein kinase spans 351-631; it reads FCETNKLGQG…QMLTTSSIAL (281 aa). Residues 357-365 and K379 each bind ATP; that span reads LGQGGFGEV. The residue at position 424 (Y424) is a Phosphotyrosine. D476 serves as the catalytic Proton acceptor. The residue at position 516 (T516) is a Phosphothreonine. Y524 bears the Phosphotyrosine mark.

The protein belongs to the protein kinase superfamily. Ser/Thr protein kinase family. CRK subfamily.

Its subcellular location is the membrane. It catalyses the reaction L-seryl-[protein] + ATP = O-phospho-L-seryl-[protein] + ADP + H(+). The enzyme catalyses L-threonyl-[protein] + ATP = O-phospho-L-threonyl-[protein] + ADP + H(+). This chain is Cysteine-rich receptor-like protein kinase 4 (CRK4), found in Arabidopsis thaliana (Mouse-ear cress).